We begin with the raw amino-acid sequence, 103 residues long: Large ribosomal subunit protein bL21 (103 aa).

Belongs to the bacterial ribosomal protein bL21 family. As to quaternary structure, part of the 50S ribosomal subunit. Contacts protein L20.

This protein binds to 23S rRNA in the presence of protein L20. This Caldicellulosiruptor saccharolyticus (strain ATCC 43494 / DSM 8903 / Tp8T 6331) protein is Large ribosomal subunit protein bL21.